We begin with the raw amino-acid sequence, 309 residues long: GTP cyclohydrolase FolE2 (309 aa).

It belongs to the GTP cyclohydrolase IV family.

The catalysed reaction is GTP + H2O = 7,8-dihydroneopterin 3'-triphosphate + formate + H(+). Its pathway is cofactor biosynthesis; 7,8-dihydroneopterin triphosphate biosynthesis; 7,8-dihydroneopterin triphosphate from GTP: step 1/1. Converts GTP to 7,8-dihydroneopterin triphosphate. The sequence is that of GTP cyclohydrolase FolE2 from Serratia proteamaculans (strain 568).